The sequence spans 469 residues: UDP-N-acetylmuramate--L-alanine ligase (469 aa).

112-118 (GTHGKTT) provides a ligand contact to ATP.

It belongs to the MurCDEF family.

It is found in the cytoplasm. The catalysed reaction is UDP-N-acetyl-alpha-D-muramate + L-alanine + ATP = UDP-N-acetyl-alpha-D-muramoyl-L-alanine + ADP + phosphate + H(+). It participates in cell wall biogenesis; peptidoglycan biosynthesis. In terms of biological role, cell wall formation. This Herminiimonas arsenicoxydans protein is UDP-N-acetylmuramate--L-alanine ligase.